Here is a 342-residue protein sequence, read N- to C-terminus: Phosphoribosylformylglycinamidine cyclo-ligase (342 aa).

It belongs to the AIR synthase family.

The protein resides in the cytoplasm. The catalysed reaction is 2-formamido-N(1)-(5-O-phospho-beta-D-ribosyl)acetamidine + ATP = 5-amino-1-(5-phospho-beta-D-ribosyl)imidazole + ADP + phosphate + H(+). It functions in the pathway purine metabolism; IMP biosynthesis via de novo pathway; 5-amino-1-(5-phospho-D-ribosyl)imidazole from N(2)-formyl-N(1)-(5-phospho-D-ribosyl)glycinamide: step 2/2. This is Phosphoribosylformylglycinamidine cyclo-ligase from Gloeothece citriformis (strain PCC 7424) (Cyanothece sp. (strain PCC 7424)).